Reading from the N-terminus, the 165-residue chain is MSHPALTQLRALRYFKEIPALDTQLLDWLLLEDSMTKRFEQQGKTVSVTMIREGFVEQNEIPEELPLLPKESRYWLREILLCADGEPWLAGRTVVPVSTLSGPELALQKLGKTPLGRYLFTSSTLTRDFIEIGRDAGLWGRRSRLRLSGKPLLLTELFLPASPLY.

Positions 35, 77, 115, and 156 each coordinate substrate.

It belongs to the UbiC family. In terms of assembly, monomer.

The protein localises to the cytoplasm. The enzyme catalyses chorismate = 4-hydroxybenzoate + pyruvate. It functions in the pathway cofactor biosynthesis; ubiquinone biosynthesis. Functionally, removes the pyruvyl group from chorismate, with concomitant aromatization of the ring, to provide 4-hydroxybenzoate (4HB) for the ubiquinone pathway. This chain is Chorismate pyruvate-lyase, found in Escherichia coli O17:K52:H18 (strain UMN026 / ExPEC).